The following is a 231-amino-acid chain: Somatolactin-1 (231 aa).

A signal peptide spans M1–S24. Disulfide bonds link C29-C39, C89-C205, and C222-C230. An N-linked (GlcNAc...) asparagine glycan is attached at N145.

Belongs to the somatotropin/prolactin family. As to expression, pituitary gland.

The protein resides in the secreted. This Sparus aurata (Gilthead sea bream) protein is Somatolactin-1.